The following is a 910-amino-acid chain: p53-induced death domain-containing protein 1 (910 aa).

Residues 1 to 25 are disordered; that stretch reads MAATVEGPELEAAAAAGDASEDSDA. Ala-2 is modified (N-acetylalanine). LRR repeat units lie at residues 126-147, 149-171, 172-194, 195-216, 218-240, 241-263, and 264-285; these read HLAH…VLQM, GLGA…GALP, ALTF…GALS, TLQR…IGGL, SLLE…AGLR, SLRL…ARLP, and LLTR…LLDA. Phosphoserine occurs at positions 299 and 305. 2 consecutive ZU5 domains span residues 322–454 and 455–596; these read DLDS…VSRP and VSNA…WYTT. Peptidase S68 stretches follow at residues 423-452 and 566-594; these read DLET…LVVS and DITA…WLWY. Active-site residues include His-444, Ser-446, His-586, and Ser-588. The interval 580-716 is UPA domain; that stretch reads ARFQVTHFSW…TTTLDREAQA (137 aa). One can recognise a Death domain in the interval 788-873; that stretch reads TQSNLLSVAG…DVAEEVRAVL (86 aa). Residues 884 to 910 are disordered; sequence IRRMGLAPKDPALPGSSAPQPPEPAQA.

Forms a complex named the PIDDosome with CASP2 and CRADD. Forms a complex with IKBKG and RIPK1. Interacts with FADD and MADD. Post-translationally, undergoes autoproteolytic processing whose extent either directs cells towards survival or apoptotic pathways. Autoproteolytically cleaved into two main fragments PIDD-N and PIDD-C. PIDD-C can be further processed into PIDD-CC, a processing which is enhanced by DNA damage. The cleavage producing PIDD-C is required for translocation of PIDD1 to the nucleus upon DNA damage and activation of NF-kappa-B. PIDD-CC mediates the interaction with CRADD and the cleavage producing PIDD-CC is required for the activation of CASP2. PIDD-N remains associated with PIDD-C and PIDD-CC after cleavage. As to expression, ubiquitous.

The protein localises to the cytoplasm. It is found in the nucleus. Component of the DNA damage/stress response pathway that functions downstream of p53/TP53 and can either promote cell survival or apoptosis. Associated with CRADD and the CASP2 caspase, it forms the PIDDosome a complex that activates CASP2 and triggers apoptosis. Associated with IKBKG and RIPK1, it enhances sumoylation and ubiquitination of IKBKG which is important for activation of the transcription factor NF-kappa-B. The sequence is that of p53-induced death domain-containing protein 1 from Homo sapiens (Human).